A 258-amino-acid chain; its full sequence is Ribonuclease HII (258 aa).

The 188-residue stretch at 71 to 258 (QLIAGIDEVG…PIKTMVNFKS (188 aa)) folds into the RNase H type-2 domain. A divalent metal cation-binding residues include Asp77, Glu78, and Asp169.

The protein belongs to the RNase HII family. Mn(2+) is required as a cofactor. It depends on Mg(2+) as a cofactor.

The protein resides in the cytoplasm. It catalyses the reaction Endonucleolytic cleavage to 5'-phosphomonoester.. Functionally, endonuclease that specifically degrades the RNA of RNA-DNA hybrids. This is Ribonuclease HII (rnhB) from Lactococcus lactis subsp. lactis (strain IL1403) (Streptococcus lactis).